We begin with the raw amino-acid sequence, 1067 residues long: Glycine--tRNA ligase, chloroplastic/mitochondrial 2 (1067 aa).

Residues 1 to 50 (MAILHFSLPLIVSFLRPHASPRFFLLPRSLSQSPFLSRRRFHRTSAVSSA) constitute a chloroplast and mitochondrion transit peptide. Glutamate 513 lines the substrate pocket. ATP-binding positions include 589–596 (RNSGINIE), 619–624 (LVVPQN), 744–745 (RL), and 859–862 (GLRR). 624 to 628 (NLLNE) serves as a coordination point for substrate. 855-859 (NDPFG) provides a ligand contact to substrate.

This sequence belongs to the class-II aminoacyl-tRNA synthetase family. In terms of assembly, homodimer.

The protein localises to the plastid. Its subcellular location is the chloroplast. It localises to the mitochondrion. It carries out the reaction tRNA(Gly) + glycine + ATP = glycyl-tRNA(Gly) + AMP + diphosphate. In terms of biological role, catalyzes the attachment of glycine to tRNA(Gly). Is also able produce diadenosine tetraphosphate (Ap4A), a universal pleiotropic signaling molecule needed for cell regulation pathways, by direct condensation of 2 ATPs. The sequence is that of Glycine--tRNA ligase, chloroplastic/mitochondrial 2 from Arabidopsis thaliana (Mouse-ear cress).